Reading from the N-terminus, the 365-residue chain is 3-dehydroquinate synthase (365 aa).

Residues G106–D110, T130–T131, K142, K151, and F169–T172 contribute to the NAD(+) site. Zn(2+) contacts are provided by E184, H247, and H264.

This sequence belongs to the sugar phosphate cyclases superfamily. Dehydroquinate synthase family. The cofactor is Co(2+). Requires Zn(2+) as cofactor. NAD(+) serves as cofactor.

The protein resides in the cytoplasm. The catalysed reaction is 7-phospho-2-dehydro-3-deoxy-D-arabino-heptonate = 3-dehydroquinate + phosphate. It participates in metabolic intermediate biosynthesis; chorismate biosynthesis; chorismate from D-erythrose 4-phosphate and phosphoenolpyruvate: step 2/7. In terms of biological role, catalyzes the conversion of 3-deoxy-D-arabino-heptulosonate 7-phosphate (DAHP) to dehydroquinate (DHQ). This Listeria monocytogenes serotype 4b (strain CLIP80459) protein is 3-dehydroquinate synthase.